The sequence spans 852 residues: Disks large homolog 2 (852 aa).

S-palmitoyl cysteine attachment occurs at residues Cys-5 and Cys-7. Ser-28 is subject to Phosphoserine. Tyr-58 bears the Phosphotyrosine mark. Position 65 is a phosphoserine (Ser-65). 2 PDZ domains span residues 98 to 184 and 193 to 279; these read EITL…VRRR and EIKL…VGKP. Residues Ser-307, Ser-328, Ser-360, Ser-365, Ser-406, and Ser-414 each carry the phosphoserine modification. Residues 421-501 enclose the PDZ 3 domain; it reads KVVLHKGSTG…QTVTIIAQYQ (81 aa). The residue at position 505 (Tyr-505) is a Phosphotyrosine. Residues Ser-528, Ser-530, and Ser-553 each carry the phosphoserine modification. The SH3 domain maps to 536–606; it reads KRSLYVRAMF…PSKRRVERKE (71 aa). The Guanylate kinase-like domain maps to 662 to 837; the sequence is TRPVIILGPM…IYNQCKLVIE (176 aa). Residues Tyr-732 and Tyr-737 each carry the phosphotyrosine modification.

The protein belongs to the MAGUK family. Interacts through its PDZ domains with NETO1. Interacts with NOS1/nNOS through second PDZ domain. Interacts with KCNJ2/Kir2.1 (via C-terminus) through one of its PDZ domains. Interacts with KCNJ4. Interacts with FRMPD4 (via C-terminus). Interacts with LRFN1. Interacts with LRFN2 and LRFN4. Interacts with FASLG. Interacts with ADAM22. Interacts with DGKI (via PDZ-binding motif). Palmitoylation of isoform 1 and isoform 2 is not required for targeting to postsynaptic density. Detected in juxtaparanodal zones in the central nervous system and at nerve terminal plexuses of basket cells in the cerebellum (at protein level). Brain. High levels in cerebellar Purkinje cells. Expressed in pyramidal cells of the Ammons's horn and granular cells of the dentate gyrus in the hippocampus as well as cerebral cortex and striatum. High levels in dorsal horn of spinal cord.

It localises to the cell membrane. The protein resides in the postsynaptic density. Its subcellular location is the synapse. The protein localises to the cell projection. It is found in the axon. It localises to the membrane. The protein resides in the perikaryon. Its function is as follows. Required for perception of chronic pain through NMDA receptor signaling. Regulates surface expression of NMDA receptors in dorsal horn neurons of the spinal cord. Interacts with the cytoplasmic tail of NMDA receptor subunits as well as inward rectifying potassium channels. Involved in regulation of synaptic stability at cholinergic synapses. Part of the postsynaptic protein scaffold of excitatory synapses. The protein is Disks large homolog 2 (Dlg2) of Rattus norvegicus (Rat).